The primary structure comprises 378 residues: Glutamate 5-kinase (378 aa).

Lys21 contacts ATP. Residues Ser61, Asp148, and Asn160 each contribute to the substrate site. ATP is bound at residue Thr180 to Asp181. In terms of domain architecture, PUA spans Arg286 to Met364.

This sequence belongs to the glutamate 5-kinase family.

Its subcellular location is the cytoplasm. The enzyme catalyses L-glutamate + ATP = L-glutamyl 5-phosphate + ADP. Its pathway is amino-acid biosynthesis; L-proline biosynthesis; L-glutamate 5-semialdehyde from L-glutamate: step 1/2. Its function is as follows. Catalyzes the transfer of a phosphate group to glutamate to form L-glutamate 5-phosphate. In Chromohalobacter salexigens (strain ATCC BAA-138 / DSM 3043 / CIP 106854 / NCIMB 13768 / 1H11), this protein is Glutamate 5-kinase.